Consider the following 330-residue polypeptide: Phosphate acyltransferase (330 aa).

It belongs to the PlsX family. In terms of assembly, homodimer. Probably interacts with PlsY.

The protein localises to the cytoplasm. It catalyses the reaction a fatty acyl-[ACP] + phosphate = an acyl phosphate + holo-[ACP]. Its pathway is lipid metabolism; phospholipid metabolism. Its function is as follows. Catalyzes the reversible formation of acyl-phosphate (acyl-PO(4)) from acyl-[acyl-carrier-protein] (acyl-ACP). This enzyme utilizes acyl-ACP as fatty acyl donor, but not acyl-CoA. The protein is Phosphate acyltransferase of Bacillus thuringiensis (strain Al Hakam).